Here is a 1330-residue protein sequence, read N- to C-terminus: Protein PUTATIVE RECOMBINATION INITIATION DEFECT 1 (1330 aa).

Residues 1310–1330 form a disordered region; the sequence is REGRVSPIQEETRQMQTERIV.

As to quaternary structure, interacts with SPO11-1. According to PubMed:28855712, may interact with SPO11-2; this is in contradiction with PubMed:9461215 which claims that it seems to not interact with SPO11-2. Binds to DFO, PRD3 and MTOPVIB. Facilitates an interaction between PRD3 and DFO. Expressed in flower buds.

The protein resides in the nucleus. Functionally, involved in DNA cleavage that forms the double-strand breaks (DSB) that initiate meiotic recombination. This Arabidopsis thaliana (Mouse-ear cress) protein is Protein PUTATIVE RECOMBINATION INITIATION DEFECT 1.